Reading from the N-terminus, the 445-residue chain is Gamma-glutamyl phosphate reductase (445 aa).

Belongs to the gamma-glutamyl phosphate reductase family.

The protein resides in the cytoplasm. It catalyses the reaction L-glutamate 5-semialdehyde + phosphate + NADP(+) = L-glutamyl 5-phosphate + NADPH + H(+). The protein operates within amino-acid biosynthesis; L-proline biosynthesis; L-glutamate 5-semialdehyde from L-glutamate: step 2/2. Functionally, catalyzes the NADPH-dependent reduction of L-glutamate 5-phosphate into L-glutamate 5-semialdehyde and phosphate. The product spontaneously undergoes cyclization to form 1-pyrroline-5-carboxylate. The chain is Gamma-glutamyl phosphate reductase from Synechococcus sp. (strain RCC307).